The following is a 293-amino-acid chain: Dioxygenase cdmA (293 aa).

3 residues coordinate Fe cation: histidine 135, aspartate 137, and histidine 212.

The protein belongs to the PhyH family. Homodimer. The cofactor is Fe cation.

The catalysed reaction is chrodrimanin C + 2-oxoglutarate + O2 = verruculide A + succinate + CO2 + H2O. It catalyses the reaction chrodrimanin H + 2-oxoglutarate + O2 = chrodrimanin E + succinate + CO2 + H2O. The protein operates within secondary metabolite biosynthesis; terpenoid biosynthesis. In terms of biological role, dioxygenase; part of the gene cluster that mediates the biosynthesis of chrodrimanin B, a meroterpenoid that acts as a potent blocker of insect GABA-gated chloride channels. The first step of the pathway is the biosynthesis of 6-hydroxymellein by the polyketide synthase cdmE. The prenyltransferase cdmH acts as a 6-hydroxymellein 5-farnesyltransferase and produces the hydrophobic metabolite verruculide C. The FAD-dependent monooxygenase cdmI further converts verruculide C into verruculide B. The terpene cyclase cdmG then produced the pentacyclic molecule 3-hydroxypentacecilide A, the backbone structure of chrodrimanin B, via folding the farnesyl moiety of the substrate into the chair-boat conformation. The short-chain dehydrogenase/reductase cdmF functions as the 3-OH dehydrogenase that oxidizes the C-3 hydroxyl group of 3-hydroxypentacecilide A and produces chrodrimanin C, the dehydrogenated product of 3-hydroxypentacecilide A. The cytochrome P450 monooxygenase cdmJ then accepts both 3-hydroxypentacecilide A and chrodrimanin C and functions as a C-7-beta-hydroxylase to produce respectively chrodrimanin H and chrodrimanin F. The dioxygenase cdmA accepts chrodrimanin H to afford chrodrimanin E, which is further transformed to chrodrimanin A by the dioxygenase cdmD. CdmA can also accept chrodrimanin C as substrate to convert it into verruculide A, which is further converted into chrodrimanin T by cdmD. The last step of the biosynthesis is proposed to be performed by the acetyltransferase cdmC which acetylates chrodrimanin A to yield chrodrimanin B. The pathway may also lead to the production of additional shunt products, including chrodrimanins T and U. The sequence is that of Dioxygenase cdmA from Talaromyces verruculosus (Penicillium verruculosum).